Consider the following 499-residue polypeptide: Glycerol kinase (499 aa).

An ADP-binding site is contributed by Thr-13. ATP is bound by residues Thr-13, Thr-14, and Ser-15. Thr-13 provides a ligand contact to sn-glycerol 3-phosphate. Residue Arg-17 participates in ADP binding. Residues Arg-83, Glu-84, Tyr-135, and Asp-245 each coordinate sn-glycerol 3-phosphate. Glycerol contacts are provided by Arg-83, Glu-84, Tyr-135, Asp-245, and Gln-246. 2 residues coordinate ADP: Thr-267 and Gly-310. The ATP site is built by Thr-267, Gly-310, Gln-314, and Gly-411. ADP-binding residues include Gly-411 and Asn-415.

It belongs to the FGGY kinase family.

The enzyme catalyses glycerol + ATP = sn-glycerol 3-phosphate + ADP + H(+). Its pathway is polyol metabolism; glycerol degradation via glycerol kinase pathway; sn-glycerol 3-phosphate from glycerol: step 1/1. With respect to regulation, inhibited by fructose 1,6-bisphosphate (FBP). Functionally, key enzyme in the regulation of glycerol uptake and metabolism. Catalyzes the phosphorylation of glycerol to yield sn-glycerol 3-phosphate. The sequence is that of Glycerol kinase from Xanthomonas campestris pv. campestris (strain 8004).